We begin with the raw amino-acid sequence, 335 residues long: Matrix protein (335 aa).

The protein belongs to the morbillivirus/respirovirus/rubulavirus M protein family. In terms of assembly, homodimer. Dimerization is critical for virion formation. Interacts with host ANP32B.

The protein resides in the virion. It is found in the host cell membrane. Its function is as follows. The M protein has a crucial role in virus assembly and interacts with the RNP complex as well as with the viral membrane. Associates with phosphatidylserine (PS) and phosphatidylinositol 4,5-bisphosphate (PIP2) at the plasma membrane. Interaction with PIP2 triggers matrix protein lattice polymerization. Matrix proteins induce host membrane deformation and curvature necessary for virion assembly/budding. This Measles virus (strain Edmonston-AIK-C vaccine) (MeV) protein is Matrix protein (M).